Here is a 396-residue protein sequence, read N- to C-terminus: Elongation factor Tu (396 aa).

In terms of domain architecture, tr-type G spans 10 to 206 (KPHVNIGTIG…AVDESVPDPV (197 aa)). The G1 stretch occupies residues 19–26 (GHVDHGKT). Position 19–26 (19–26 (GHVDHGKT)) interacts with GTP. A Mg(2+)-binding site is contributed by threonine 26. The G2 stretch occupies residues 62–66 (GITIN). Positions 83 to 86 (DAPG) are G3. GTP is bound by residues 83-87 (DAPGH) and 138-141 (NKAD). The segment at 138-141 (NKAD) is G4. Residues 176-178 (SGL) are G5.

This sequence belongs to the TRAFAC class translation factor GTPase superfamily. Classic translation factor GTPase family. EF-Tu/EF-1A subfamily. Monomer.

It localises to the cytoplasm. It catalyses the reaction GTP + H2O = GDP + phosphate + H(+). Its function is as follows. GTP hydrolase that promotes the GTP-dependent binding of aminoacyl-tRNA to the A-site of ribosomes during protein biosynthesis. The polypeptide is Elongation factor Tu (Arthrobacter sp. (strain FB24)).